A 288-amino-acid polypeptide reads, in one-letter code: Aquaporin PIP1-5 (288 aa).

The tract at residues 1 to 36 (MEGKEEDVRLGANRYSERQPIGTAAQGTEEKDYKEP) is disordered. 2 helical membrane passes run 57–77 (IAEFVATFLFLYISILTVMGV) and 92–114 (IAWSFGGMIFALVYCTAGISGGH). Positions 116-118 (NPA) match the NPA 1 motif. 3 helical membrane passes run 135–155 (LFYMVMQCLGAICGAGVVKGF), 177–197 (GDGLGAEIVGTFVLVYTVFSA), and 211–231 (ILAPLPIGFAVFLVHLATIPI). Residues 237 to 239 (NPA) carry the NPA 2 motif. Residues 259–279 (IFWVGPFIGAALAAIYHVVII) form a helical membrane-spanning segment.

This sequence belongs to the MIP/aquaporin (TC 1.A.8) family. PIP (TC 1.A.8.11) subfamily. As to expression, highly expressed in roots and at lower levels in anthers and silks.

Its subcellular location is the cell membrane. Water channel required to facilitate the transport of water across cell membrane. This Zea mays (Maize) protein is Aquaporin PIP1-5 (PIP1-5).